A 509-amino-acid polypeptide reads, in one-letter code: Lysine--tRNA ligase (509 aa).

E417 and E424 together coordinate Mg(2+).

The protein belongs to the class-II aminoacyl-tRNA synthetase family. In terms of assembly, homodimer. It depends on Mg(2+) as a cofactor.

It is found in the cytoplasm. The catalysed reaction is tRNA(Lys) + L-lysine + ATP = L-lysyl-tRNA(Lys) + AMP + diphosphate. This Blochmanniella pennsylvanica (strain BPEN) protein is Lysine--tRNA ligase.